A 192-amino-acid chain; its full sequence is Adenylate kinase (192 aa).

10-18 is a binding site for ATP; that stretch reads GVPGVGKTT.

The protein belongs to the archaeal adenylate kinase family.

Its subcellular location is the cytoplasm. The enzyme catalyses AMP + ATP = 2 ADP. This is Adenylate kinase from Methanoculleus marisnigri (strain ATCC 35101 / DSM 1498 / JR1).